Reading from the N-terminus, the 749-residue chain is MLLLLCNRSVVPRGIRRILRTAATVTSLRWNHTGPSASETLLEKNIRNIGILAHIDGGKTTTTERMLFYAGKTNVLGEVHHGNTVTDFLVQERERGITICSAAVSFDWRDHRVNLLDTPGHIDFTMEVEQSLAAVDGTVVILDGSAGVEAQTVTVWSQADRHRLPRLVFVNKMDKESADFEGCLEELEKKLGVVAVPLQMPVIKEGKLTGVVDVLSGAQVVWDKQNHGRTYKAIPLVDQQLVEAQDKLYQIIDVLSGMDDGLAQVIIESDSMDNVKPELVASAIRACTMKQQIVPVFLGSAYKNIGVQLLMDAVLKYLPAPNERNEIYNCFGSDFVGKISKVTHDKQRGPLSLVRVFRGTLKKGAKIITAKGTSETIQRIYAPWADEYREISSISAGNVGLCAGPKSTVTGDLVVANASVLRNALKKLSPTNDGVEEDDINELLASKLSFHTVVPDAVYFCSIEPPSSSYQAALDAALREIQREDPSLRVSYDETTMQTVLGGMGKLHLEIIKSRILSEYKIDVDLGPLQIAYKETLEEPARGSWTAEKEIAGSKQLVRMEVTVHAKRKDERFLLDSSPEAQENLRMIRPRQMSYVRKGSLAALERGPKLGGQLMDVAVTLHQLTIGKGTADTFIMAATAQCVRHVLSSAKCRLMEPIMLLEMVMPAEHLNPILADLGKRRCEILDVTARGQQHKVLRANAPLAELEDYSSEVRCISSGTASVSMEPNGYALLSEMDEASAIRRAHGLE.

Residues 1-22 constitute a mitochondrion transit peptide; it reads MLLLLCNRSVVPRGIRRILRTA. One can recognise a tr-type G domain in the interval 44–322; that stretch reads KNIRNIGILA…AVLKYLPAPN (279 aa). GTP is bound by residues 53 to 60, 117 to 121, and 171 to 174; these read AHIDGGKT, DTPGH, and NKMD.

Belongs to the TRAFAC class translation factor GTPase superfamily. Classic translation factor GTPase family. EF-G/EF-2 subfamily.

Its subcellular location is the mitochondrion. Mitochondrial GTPase that mediates the disassembly of ribosomes from messenger RNA at the termination of mitochondrial protein biosynthesis. Not involved in the GTP-dependent ribosomal translocation step during translation elongation. The chain is Ribosome-releasing factor 2, mitochondrial from Culex quinquefasciatus (Southern house mosquito).